An 88-amino-acid polypeptide reads, in one-letter code: Apolipoprotein C-I (88 aa).

A signal peptide spans 1–26 (MRLFLSLPVLVVVLAMVLEGPAPTQA).

This sequence belongs to the apolipoprotein C1 family.

The protein resides in the secreted. Functionally, inhibitor of lipoprotein binding to the low density lipoprotein (LDL) receptor, LDL receptor-related protein, and very low density lipoprotein (VLDL) receptor. Associates with high density lipoproteins (HDL) and the triacylglycerol-rich lipoproteins in the plasma and makes up about 10% of the protein of the VLDL and 2% of that of HDL. Appears to interfere directly with fatty acid uptake and is also the major plasma inhibitor of cholesteryl ester transfer protein (CETP). Binds free fatty acids and reduces their intracellular esterification. Modulates the interaction of APOE with beta-migrating VLDL and inhibits binding of beta-VLDL to the LDL receptor-related protein. The chain is Apolipoprotein C-I (APOC1) from Mirounga angustirostris (Northern elephant seal).